Reading from the N-terminus, the 309-residue chain is MMLFKNRHVISMKDFSREEIDYILDIAEKLEPVARGEERSRLLDGKIISLLFFEPSTRTRLSFEVATRRLGGQVLSLGSVEASSVMKGENLADTIRVISKYADLIVLRHPLDGSARMATEFAAVPVINGGDGSVHHPTQTFLDLYTIRRESHLEGLKIAMAGDLKYGRTVHSLCYALSLYGAEMTFVSPPELRMPREIVRELRKKNIRVKESECLEEIIGDIEVLYMTRVQRERFPDPQEYEKVKNKLKITGDLLKSADPELKILHPLPRVNEISPDVDDTPHARYFEQAFYGVPIRMALLALTIGVIE.

The carbamoyl phosphate site is built by arginine 58 and threonine 59. Lysine 87 serves as a coordination point for L-aspartate. Residues arginine 108, histidine 136, and glutamine 139 each coordinate carbamoyl phosphate. L-aspartate contacts are provided by arginine 168 and arginine 229. Carbamoyl phosphate-binding residues include leucine 268 and proline 269.

It belongs to the aspartate/ornithine carbamoyltransferase superfamily. ATCase family. Heterooligomer of catalytic and regulatory chains.

It carries out the reaction carbamoyl phosphate + L-aspartate = N-carbamoyl-L-aspartate + phosphate + H(+). The protein operates within pyrimidine metabolism; UMP biosynthesis via de novo pathway; (S)-dihydroorotate from bicarbonate: step 2/3. Its function is as follows. Catalyzes the condensation of carbamoyl phosphate and aspartate to form carbamoyl aspartate and inorganic phosphate, the committed step in the de novo pyrimidine nucleotide biosynthesis pathway. The protein is Aspartate carbamoyltransferase catalytic subunit of Methanosarcina mazei (strain ATCC BAA-159 / DSM 3647 / Goe1 / Go1 / JCM 11833 / OCM 88) (Methanosarcina frisia).